A 194-amino-acid polypeptide reads, in one-letter code: MLEKIAEVQKKLSKRIVEKEVRMVSKIAAVDVSYKGNKARVALVICSFPDCKVLKTKVLETEVSFPYIPTFFFLRETRPILLVTKGEEFDVLIVEGHGKAHPRKYGLASHIGLILGKPTIGVAKKLLRGTPENSYRKVGKAYVSVGNMITLKDAVRIIEKLLDGGYPKPLKLADKLSKGKISEDENTLPSDKTS.

Residues Asp-31 and Glu-95 each coordinate Mg(2+).

Belongs to the endonuclease V family. The cofactor is Mg(2+).

Its subcellular location is the cytoplasm. The catalysed reaction is Endonucleolytic cleavage at apurinic or apyrimidinic sites to products with a 5'-phosphate.. DNA repair enzyme involved in the repair of deaminated bases. Selectively cleaves double-stranded DNA at the second phosphodiester bond 3' to a deoxyinosine leaving behind the intact lesion on the nicked DNA. This Pyrococcus abyssi (strain GE5 / Orsay) protein is Endonuclease V.